We begin with the raw amino-acid sequence, 822 residues long: Nuclear factor of activated T-cells, cytoplasmic 1 (822 aa).

The interval 110 to 115 is calcineurin-binding; sequence PRIEIT. The tract at residues 118–210 is transactivation domain A (TAD-A); it reads LGLHHNNGQF…CVSPKTTDPE (93 aa). Over residues 192–206 the composition is skewed to polar residues; sequence PQTSPWQSPCVSPKT. The disordered stretch occupies residues 192-289; that stretch reads PQTSPWQSPC…HSSPRVSVTD (98 aa). 2 tandem repeats follow at residues 195–211 and 225–241. Residues 195-290 are 3 X SP repeats; the sequence is SPWQSPCVSP…SSPRVSVTDD (96 aa). Phosphoserine occurs at positions 225 and 229. The span at 225-242 shows a compositional bias: low complexity; sequence SPRHSPSTSPRTSVTEES. Phosphoserine; by PKA is present on serine 237. A Nuclear localization signal motif is present at residues 257 to 259; that stretch reads KRK. Copy 3 of the repeat occupies 274–290; it reads SPTPSPHSSPRVSVTDD. Serine 286 bears the Phosphoserine; by PKA mark. The short motif at 302-313 is the Nuclear export signal element; that stretch reads SAIVAAINALST. The RHD domain occupies 400–582; that stretch reads PSLPALDWQL…NPIECSQRSA (183 aa). A DNA-binding region spans residues 429–436; sequence RAHYETEG. A Nuclear localization signal motif is present at residues 672–674; it reads KRK. The disordered stretch occupies residues 772 to 822; that stretch reads GPGHLGLQRPAGGVLGGQEAPRPGGPHPGAPQLHPLNLSQSIVTRLTEPQP. Residues 808-822 show a composition bias toward polar residues; the sequence is NLSQSIVTRLTEPQP.

In terms of assembly, member of the multicomponent NFATC transcription complex that consists of at least two components, a pre-existing cytoplasmic component NFATC2 and an inducible nuclear component NFATC1. Other members such as NFATC4, NFATC3 or members of the activating protein-1 family, MAF, GATA4 and Cbp/p300 can also bind the complex. NFATC proteins bind to DNA as monomers. Interacts with HOMER2 and HOMER3; this interaction may compete with calcineurin/PPP3CA-binding and hence prevent NFATC1 dephosphorylation and activation. Interacts with TLE6/GRG6. Phosphorylated by NFATC-kinase and GSK3B; phosphorylation induces NFATC1 nuclear exit and dephosphorylation by calcineurin promotes nuclear import. Phosphorylation by PKA and DYRK2 negatively modulates nuclear accumulation, and promotes subsequent phosphorylation by GSK3B or casein kinase 1.

It localises to the cytoplasm. The protein resides in the nucleus. In terms of biological role, plays a role in the inducible expression of cytokine genes in T-cells, especially in the induction of the IL-2 or IL-4 gene transcription. Also controls gene expression in embryonic cardiac cells. Could regulate not only the activation and proliferation but also the differentiation and programmed death of T-lymphocytes as well as lymphoid and non-lymphoid cells. Required for osteoclastogenesis and regulates many genes important for osteoclast differentiation and function. This chain is Nuclear factor of activated T-cells, cytoplasmic 1 (NFATC1), found in Sus scrofa (Pig).